The sequence spans 186 residues: dCTP deaminase (186 aa).

107-112 (KSTYAR) is a binding site for dCTP. The active-site Proton donor/acceptor is the Glu133. Positions 152, 166, and 176 each coordinate dCTP.

The protein belongs to the dCTP deaminase family. Homotrimer.

It catalyses the reaction dCTP + H2O + H(+) = dUTP + NH4(+). It functions in the pathway pyrimidine metabolism; dUMP biosynthesis; dUMP from dCTP (dUTP route): step 1/2. In terms of biological role, catalyzes the deamination of dCTP to dUTP. This Campylobacter curvus (strain 525.92) protein is dCTP deaminase.